The chain runs to 325 residues: Formimidoylglutamase (325 aa).

The Mn(2+) site is built by His130, Asp156, His158, Asp160, Cys244, and Asp246.

It belongs to the arginase family. Mn(2+) is required as a cofactor.

It carries out the reaction N-formimidoyl-L-glutamate + H2O = formamide + L-glutamate. It participates in amino-acid degradation; L-histidine degradation into L-glutamate; L-glutamate from N-formimidoyl-L-glutamate (hydrolase route): step 1/1. In terms of biological role, catalyzes the conversion of N-formimidoyl-L-glutamate to L-glutamate and formamide. This is Formimidoylglutamase from Geobacillus sp. (strain WCH70).